The primary structure comprises 246 residues: Large ribosomal subunit protein uL30-like 1 (246 aa).

Ser-54 bears the Phosphoserine mark.

It belongs to the universal ribosomal protein uL30 family.

This is Large ribosomal subunit protein uL30-like 1 (RPL7L1) from Pongo abelii (Sumatran orangutan).